Here is a 227-residue protein sequence, read N- to C-terminus: MAHPVQLSLQDATSPVMEELITFHDHAFMAMSLISFLVLYALLSTLTTKLTNTSITDAQEMETIWTILPAIILILIALPSLRILYLTDEVNDPSFTIKSIGHQWYWTYEYTDYGGLIFNSYMLPPLFLNPGDLRLLEVDNRVVLPIEAPVRMMITSQDVLHSWTIPTLGLKTDAVPGRLNQTVFTATRPGVYYGQCSEICGANHSFMPIVAELIPLKIFEMGPVLTL.

Topologically, residues 1-14 (MAHPVQLSLQDATS) are mitochondrial intermembrane. The helical transmembrane segment at 15 to 45 (PVMEELITFHDHAFMAMSLISFLVLYALLST) threads the bilayer. Residues 46-59 (LTTKLTNTSITDAQ) are Mitochondrial matrix-facing. A helical membrane pass occupies residues 60-87 (EMETIWTILPAIILILIALPSLRILYLT). Residues 88–227 (DEVNDPSFTI…IFEMGPVLTL (140 aa)) lie on the Mitochondrial intermembrane side of the membrane. Residues H161, C196, E198, C200, H204, and M207 each contribute to the Cu cation site. E198 serves as a coordination point for Mg(2+).

The protein belongs to the cytochrome c oxidase subunit 2 family. Component of the cytochrome c oxidase (complex IV, CIV), a multisubunit enzyme composed of 14 subunits. The complex is composed of a catalytic core of 3 subunits MT-CO1, MT-CO2 and MT-CO3, encoded in the mitochondrial DNA, and 11 supernumerary subunits COX4I, COX5A, COX5B, COX6A, COX6B, COX6C, COX7A, COX7B, COX7C, COX8 and NDUFA4, which are encoded in the nuclear genome. The complex exists as a monomer or a dimer and forms supercomplexes (SCs) in the inner mitochondrial membrane with NADH-ubiquinone oxidoreductase (complex I, CI) and ubiquinol-cytochrome c oxidoreductase (cytochrome b-c1 complex, complex III, CIII), resulting in different assemblies (supercomplex SCI(1)III(2)IV(1) and megacomplex MCI(2)III(2)IV(2)). Found in a complex with TMEM177, COA6, COX18, COX20, SCO1 and SCO2. Interacts with TMEM177 in a COX20-dependent manner. Interacts with COX20. Interacts with COX16. Requires Cu cation as cofactor.

It localises to the mitochondrion inner membrane. It carries out the reaction 4 Fe(II)-[cytochrome c] + O2 + 8 H(+)(in) = 4 Fe(III)-[cytochrome c] + 2 H2O + 4 H(+)(out). Component of the cytochrome c oxidase, the last enzyme in the mitochondrial electron transport chain which drives oxidative phosphorylation. The respiratory chain contains 3 multisubunit complexes succinate dehydrogenase (complex II, CII), ubiquinol-cytochrome c oxidoreductase (cytochrome b-c1 complex, complex III, CIII) and cytochrome c oxidase (complex IV, CIV), that cooperate to transfer electrons derived from NADH and succinate to molecular oxygen, creating an electrochemical gradient over the inner membrane that drives transmembrane transport and the ATP synthase. Cytochrome c oxidase is the component of the respiratory chain that catalyzes the reduction of oxygen to water. Electrons originating from reduced cytochrome c in the intermembrane space (IMS) are transferred via the dinuclear copper A center (CU(A)) of subunit 2 and heme A of subunit 1 to the active site in subunit 1, a binuclear center (BNC) formed by heme A3 and copper B (CU(B)). The BNC reduces molecular oxygen to 2 water molecules using 4 electrons from cytochrome c in the IMS and 4 protons from the mitochondrial matrix. In Macaca mulatta (Rhesus macaque), this protein is Cytochrome c oxidase subunit 2 (MT-CO2).